Reading from the N-terminus, the 640-residue chain is MDGFEFFSGRSDVVAMICDDRLLDLSESIPSGKVPEPIELDSPRGLDILRHSCAHVLAQAVQSIYGDAKLGIGPFTENGFYYDFSVNEPFSSDSLRVIEDKMREIVHSDQKFVRKVVDRQSAHSQFRDEPFKLEIINATDDTLSIYYNIDADSGSVRWMDFCRGPHLPSTRFIGDAFALTHVSSVYWRGNSDNPQMQRVYGTAWGSAKDLKGYLDRVELAKLVDHRKLGKELDLFSLPDEIGPGLALFHVKGGIIRSEMEQYARLRHLEEGYNFVYSPHITKRDLFERSGHLQWYGQSMFPPMRLDKDSCSQGFDYYLKPMNCPFHSLVFSSQPRSYRQLPLRLAEFGTVYRYEQSGAIHGLARVRGLTQDDAHIYATRESFEDEVSKALQFTISLLGDYGLDQFYIEISTRDASGKFLGSDEDWAYATHILQKVAQDSGLQTRDDPGGAAFYGPKISVQAKDAIGRYWQMSTIQLDFNLPERFGLFYTDRAGERKRPIMVHRALFGSFERFFAVLTEHYAGAFPPWLSPEQVVALPVTSAHIPYLEEFVSRFSSRLIRARVDYMQDRLPKKIRSYVKEKIPFVLVAGDRDLTNRTVAIRFRDGTQISDLPIQKCFDGICASIDRKKQIQTRIDFDSVLE.

The tract at residues 224 to 525 is catalytic; sequence DHRKLGKELD…LTEHYAGAFP (302 aa). 3 residues coordinate Zn(2+): cysteine 323, histidine 374, and histidine 502.

This sequence belongs to the class-II aminoacyl-tRNA synthetase family. Homodimer. It depends on Zn(2+) as a cofactor.

It is found in the cytoplasm. The enzyme catalyses tRNA(Thr) + L-threonine + ATP = L-threonyl-tRNA(Thr) + AMP + diphosphate + H(+). Functionally, catalyzes the attachment of threonine to tRNA(Thr) in a two-step reaction: L-threonine is first activated by ATP to form Thr-AMP and then transferred to the acceptor end of tRNA(Thr). Also edits incorrectly charged L-seryl-tRNA(Thr). This is Threonine--tRNA ligase from Tropheryma whipplei (strain TW08/27) (Whipple's bacillus).